The following is a 335-amino-acid chain: 2-acylglycerol O-acyltransferase 2-A (335 aa).

2 helical membrane-spanning segments follow: residues 24 to 44 (WVFSFLALAQTCILLFFVLLF) and 47 to 67 (FWIISVVYGVWWFLDWDTPSK).

The protein belongs to the diacylglycerol acyltransferase family.

Its subcellular location is the endoplasmic reticulum membrane. The protein resides in the cytoplasm. It localises to the perinuclear region. The enzyme catalyses a 2-acylglycerol + an acyl-CoA = a 1,2-diacylglycerol + CoA. It catalyses the reaction a 2-acylglycerol + an acyl-CoA = a 1,2-diacyl-sn-glycerol + CoA. It carries out the reaction a 2-acylglycerol + an acyl-CoA = a 2,3-diacyl-sn-glycerol + CoA. The catalysed reaction is a 1-acylglycerol + an acyl-CoA = a 1,2-diacylglycerol + CoA. The enzyme catalyses a 1-acylglycerol + an acyl-CoA = a 1,3-diacylglycerol + CoA. It catalyses the reaction 1-O-alkylglycerol + an acyl-CoA = 1-O-alkyl-3-acylglycerol + CoA. It carries out the reaction an acyl-CoA + a 1,2-diacyl-sn-glycerol = a triacyl-sn-glycerol + CoA. It participates in glycerolipid metabolism; triacylglycerol biosynthesis. Catalyzes the formation of diacylglycerol from 2-monoacylglycerol and fatty acyl-CoA. Its function is as follows. Involved in glycerolipid synthesis and lipid metabolism. Catalyzes the formation of diacylglycerol, the precursor of triacylglycerol, by transferring the acyl chain of a fatty acyl-CoA to a monoacylglycerol. Plays a central role in absorption of dietary fat in the small intestine by catalyzing the resynthesis of triacylglycerol in enterocytes. Has a preference toward monoacylglycerols containing unsaturated fatty acids in an order of C18:3 &gt; C18:2 &gt; C18:1 &gt; C18:0 at sn-2. Able to use 1-monoalkylglycerol (1-MAkG, 1-O-alkylglycerol) as an acyl acceptor for the synthesis of monoalkyl-monoacylglycerol (MAMAG, 1-O-alkyl-3-acylglycerol or 1-O-alkyl-2-acylglycerol) and subsequently, with lower efficiency, may add another acyl chain producing monoalkyl-diacylglycerol (MADAG, 1-O-alkyl-2,3-diacylglycerol). Possesses weak but significant activity with diacylglycerol as substrate, producing triacylglycerol (triacyl-sn-glycerol). This is 2-acylglycerol O-acyltransferase 2-A (mogat2-a) from Xenopus laevis (African clawed frog).